The following is a 469-amino-acid chain: 3-phosphoshikimate 1-carboxyvinyltransferase (469 aa).

The segment at 21–45 is disordered; it reads KDTILTHSDQPRPLQSRANGPLTGK. Residues Lys52, Ser53, and Arg57 each contribute to the 3-phosphoshikimate site. A phosphoenolpyruvate-binding site is contributed by Lys52. Phosphoenolpyruvate is bound by residues Gly125 and Arg153. 3-phosphoshikimate-binding residues include Ser199, Gln201, Asp352, and Lys379. Gln201 is a binding site for phosphoenolpyruvate. Asp352 (proton acceptor) is an active-site residue. Arg383 and Arg426 together coordinate phosphoenolpyruvate.

This sequence belongs to the EPSP synthase family. As to quaternary structure, monomer.

It localises to the cytoplasm. It catalyses the reaction 3-phosphoshikimate + phosphoenolpyruvate = 5-O-(1-carboxyvinyl)-3-phosphoshikimate + phosphate. The protein operates within metabolic intermediate biosynthesis; chorismate biosynthesis; chorismate from D-erythrose 4-phosphate and phosphoenolpyruvate: step 6/7. Its function is as follows. Catalyzes the transfer of the enolpyruvyl moiety of phosphoenolpyruvate (PEP) to the 5-hydroxyl of shikimate-3-phosphate (S3P) to produce enolpyruvyl shikimate-3-phosphate and inorganic phosphate. This Bradyrhizobium diazoefficiens (strain JCM 10833 / BCRC 13528 / IAM 13628 / NBRC 14792 / USDA 110) protein is 3-phosphoshikimate 1-carboxyvinyltransferase.